The sequence spans 441 residues: Leucine-rich repeat-containing protein 17 (441 aa).

The N-terminal stretch at 1-18 (MRVVTIVILLCFCKAAEL) is a signal peptide. LRR repeat units lie at residues 82–103 (DLLH…MFSK), 106–127 (KLKS…AFFG), and 130–151 (KLTT…VFIY). The LRRCT 1 domain maps to 163 to 214 (NPWHCTCEIETLISMLQIPRNRNLGNYAKCESPQEQKNKKLRQIKSEQLCNE). The region spanning 225–268 (QVSGRPPVIKPEVDSTFCHNYVFPIQTLDCKRKELKKVPNNIPP) is the LRRNT domain. LRR repeat units lie at residues 269 to 290 (DIVK…EFED), 293 to 314 (ELKK…AFLG), and 317 to 340 (HLEE…EDLY). In terms of domain architecture, LRRCT 2 spans 350-402 (NPWRCDYNIHYLYYWLKHHYNVHFNGLECKTPEEYKGWSVGKYIRSYYEECPK).

In terms of tissue distribution, expressed in osteoblast cell lines. Well expressed in ovary, heart, pancreas, skeletal muscle, lung, and fetal kidney and lung and only at the basal levels in the other tissues examined including adult kidney. More expressed in S-type neuroblastoma cells than in N-type neuroblastoma cells.

It is found in the secreted. The protein localises to the extracellular space. Functionally, involved in bone homeostasis. Acts as a negative regulator of RANKL-induced osteoclast precursor differentiation from bone marrow precursors. This chain is Leucine-rich repeat-containing protein 17 (LRRC17), found in Homo sapiens (Human).